Reading from the N-terminus, the 534-residue chain is MFS transporter fmqE (534 aa).

Helical transmembrane passes span L48 to S68, L109 to A129, W136 to S156, G169 to I189, A194 to V214, I228 to P248, A326 to V346, V349 to L369, L379 to F399, L407 to V427, V447 to Y467, and T478 to P498.

It belongs to the major facilitator superfamily. Sugar transporter (TC 2.A.1.1) family.

It localises to the cytoplasmic vesicle membrane. MFS transporter; part of the gene cluster that mediates the biosynthesis of the antitumor cytotoxic peptidyl alkaloids fumiquinazolines that confer a dual-usage capability to defend against phagocytes in the environment and animal hosts. Probably involved in fumiquinazolines metabolism and transport. The chain is MFS transporter fmqE from Aspergillus fumigatus (strain ATCC MYA-4609 / CBS 101355 / FGSC A1100 / Af293) (Neosartorya fumigata).